A 954-amino-acid polypeptide reads, in one-letter code: Glucosidase 2 subunit alpha (954 aa).

The signal sequence occupies residues 1 to 22 (MVLLKWLVCQLVFFTAFSHAFT). Asparagine 114, asparagine 126, asparagine 142, asparagine 173, and asparagine 345 each carry an N-linked (GlcNAc...) asparagine glycan. The active-site Nucleophile is aspartate 537. Residue glutamate 540 is part of the active site. Aspartate 614 (proton donor) is an active-site residue. N-linked (GlcNAc...) asparagine glycans are attached at residues asparagine 783, asparagine 791, asparagine 867, asparagine 880, asparagine 907, and asparagine 941.

This sequence belongs to the glycosyl hydrolase 31 family. Heterodimer of a catalytic subunit alpha (ROT2) and a subunit beta (GTB1).

The protein localises to the endoplasmic reticulum. It carries out the reaction N(4)-(alpha-D-Glc-(1-&gt;3)-alpha-D-Man-(1-&gt;2)-alpha-D-Man-(1-&gt;2)-alpha-D-Man-(1-&gt;3)-[alpha-D-Man-(1-&gt;2)-alpha-D-Man-(1-&gt;3)-[alpha-D-Man-(1-&gt;2)-alpha-D-Man-(1-&gt;6)]-alpha-D-Man-(1-&gt;6)]-beta-D-Man-(1-&gt;4)-beta-D-GlcNAc-(1-&gt;4)-beta-D-GlcNAc)-L-asparaginyl-[protein] + H2O = N(4)-(alpha-D-Man-(1-&gt;2)-alpha-D-Man-(1-&gt;2)-alpha-D-Man-(1-&gt;3)-[alpha-D-Man-(1-&gt;2)-alpha-D-Man-(1-&gt;3)-[alpha-D-Man-(1-&gt;2)-alpha-D-Man-(1-&gt;6)]-alpha-D-Man-(1-&gt;6)]-beta-D-Man-(1-&gt;4)-beta-D-GlcNAc-(1-&gt;4)-beta-D-GlcNAc)-L-asparaginyl-[protein] (N-glucan mannose isomer 9A1,2,3B1,2,3) + beta-D-glucose. The enzyme catalyses N(4)-(alpha-D-Glc-(1-&gt;3)-alpha-D-Glc-(1-&gt;3)-alpha-D-Man-(1-&gt;2)-alpha-D-Man-(1-&gt;2)-alpha-D-Man-(1-&gt;3)-[alpha-D-Man-(1-&gt;2)-alpha-D-Man-(1-&gt;3)-[alpha-D-Man-(1-&gt;2)-alpha-D-Man-(1-&gt;6)]-alpha-D-Man-(1-&gt;6)]-beta-D-Man-(1-&gt;4)-beta-D-GlcNAc-(1-&gt;4)-beta-D-GlcNAc)-L-asparaginyl-[protein] + H2O = N(4)-(alpha-D-Glc-(1-&gt;3)-alpha-D-Man-(1-&gt;2)-alpha-D-Man-(1-&gt;2)-alpha-D-Man-(1-&gt;3)-[alpha-D-Man-(1-&gt;2)-alpha-D-Man-(1-&gt;3)-[alpha-D-Man-(1-&gt;2)-alpha-D-Man-(1-&gt;6)]-alpha-D-Man-(1-&gt;6)]-beta-D-Man-(1-&gt;4)-beta-D-GlcNAc-(1-&gt;4)-beta-D-GlcNAc)-L-asparaginyl-[protein] + beta-D-glucose. The protein operates within glycan metabolism; N-glycan metabolism. With respect to regulation, inhibited by glucose, maltose and nigerose, and by the antibiotic deoxynojirimycin. In terms of biological role, catalytic subunit of glucosidase 2, which cleaves sequentially the 2 innermost alpha-1,3-linked glucose residues from the Glc(2)Man(9)GlcNAc(2) oligosaccharide precursor of immature glycoproteins. The polypeptide is Glucosidase 2 subunit alpha (ROT2) (Saccharomyces cerevisiae (strain ATCC 204508 / S288c) (Baker's yeast)).